The following is a 146-amino-acid chain: NADH-quinone oxidoreductase subunit A (146 aa).

3 helical membrane-spanning segments follow: residues 4 to 24, 63 to 83, and 91 to 111; these read IYHW…VFML, LIAM…AWAI, and IGFS…IYLI.

The protein belongs to the complex I subunit 3 family. In terms of assembly, NDH-1 is composed of 13 different subunits. Subunits NuoA, H, J, K, L, M, N constitute the membrane sector of the complex.

It localises to the cell inner membrane. The catalysed reaction is a quinone + NADH + 5 H(+)(in) = a quinol + NAD(+) + 4 H(+)(out). Functionally, NDH-1 shuttles electrons from NADH, via FMN and iron-sulfur (Fe-S) centers, to quinones in the respiratory chain. The immediate electron acceptor for the enzyme in this species is believed to be ubiquinone. Couples the redox reaction to proton translocation (for every two electrons transferred, four hydrogen ions are translocated across the cytoplasmic membrane), and thus conserves the redox energy in a proton gradient. The sequence is that of NADH-quinone oxidoreductase subunit A from Blochmanniella pennsylvanica (strain BPEN).